Here is a 281-residue protein sequence, read N- to C-terminus: Insulin-like growth factor-binding protein 2 (281 aa).

Residues 1 to 21 (MVLSEHLLVLLGAVLCAPALS) form the signal peptide. The 84-residue stretch at 23-106 (VLFRCPPCSP…VLGLGTCGKR (84 aa)) folds into the IGFBP N-terminal domain. Intrachain disulfides connect Cys-27/Cys-56, Cys-30/Cys-58, Cys-38/Cys-59, Cys-47/Cys-62, Cys-70/Cys-83, and Cys-77/Cys-103. Disordered regions lie at residues 107 to 127 (RDAEYGSSQERGTELPEDQSD) and 139 to 180 (PAVP…RPAR). Over residues 156–176 (VNRERANEQHRSKTNKSEDKK) the composition is skewed to basic and acidic residues. Residues 180–262 (RSLCQLQLDQ…SPTVRGDPEC (83 aa)) enclose the Thyroglobulin type-1 domain. Disulfide bonds link Cys-183-Cys-217, Cys-228-Cys-239, and Cys-241-Cys-262. Positions 257–259 (RGD) match the Cell attachment site motif.

In terms of assembly, interacts with igf1 and igf2.

It localises to the secreted. IGF-binding proteins prolong the half-life of the IGFs and have been shown to either inhibit or stimulate the growth promoting effects of the IGFs on cell culture. They alter the interaction of IGFs with their cell surface receptors. The sequence is that of Insulin-like growth factor-binding protein 2 (igfbp2) from Xenopus laevis (African clawed frog).